We begin with the raw amino-acid sequence, 297 residues long: ATP synthase gamma chain (297 aa).

This sequence belongs to the ATPase gamma chain family. F-type ATPases have 2 components, CF(1) - the catalytic core - and CF(0) - the membrane proton channel. CF(1) has five subunits: alpha(3), beta(3), gamma(1), delta(1), epsilon(1). CF(0) has three main subunits: a, b and c.

The protein resides in the cell membrane. Its function is as follows. Produces ATP from ADP in the presence of a proton gradient across the membrane. The gamma chain is believed to be important in regulating ATPase activity and the flow of protons through the CF(0) complex. The polypeptide is ATP synthase gamma chain (Renibacterium salmoninarum (strain ATCC 33209 / DSM 20767 / JCM 11484 / NBRC 15589 / NCIMB 2235)).